Consider the following 864-residue polypeptide: Arf-GAP with GTPase, ANK repeat and PH domain-containing protein 1 (864 aa).

Residues 66-276 are small GTPase-like; the sequence is SRSVPELKVG…QTSNGGGSLS (211 aa). The region spanning 67-241 is the GLD domain; sequence RSVPELKVGI…TRKKQQLSIG (175 aa). GTP is bound by residues 78 to 85, 122 to 126, and 178 to 181; these read GNLASGKS, IRDEG, and TQDA. 3 disordered regions span residues 266–343, 405–455, and 499–549; these read SQTS…IGSG, VPGK…QMAS, and TGLG…LSST. Positions 275 to 289 are enriched in low complexity; the sequence is LSDYSSSVPSTPSTS. Residues 322–337 show a composition bias toward basic and acidic residues; the sequence is KGSDPDKDKKGLESRA. In terms of domain architecture, PH spans 346–591; sequence IPIKQGMLLK…WVQAIESQIL (246 aa). A compositionally biased stretch (polar residues) spans 413–428; it reads ATSSCAPVASPKTNGL. Residues 507 to 517 are compositionally biased toward low complexity; it reads SSPSISSTTSP. Basic residues predominate over residues 527-537; that stretch reads ANRKKHRRKKS. Over residues 538–549 the composition is skewed to polar residues; that stretch reads TSNFKVDGLSST. The region spanning 612 to 732 is the Arf-GAP domain; that stretch reads ALALQSIRNL…LFLSPLPCRD (121 aa). The C4-type zinc finger occupies 627–650; sequence CVDCDAQSPDWASLNLGALMCIEC. ANK repeat units lie at residues 771 to 800 and 804 to 833; these read DRRT…DVMA and HGNT…PDEQ. Positions 845–854 are enriched in low complexity; it reads KNNRNNNSNA. A disordered region spans residues 845–864; it reads KNNRNNNSNAGGSGLMPTLI.

Belongs to the centaurin gamma-like family. In terms of assembly, homodimer. Interacts with several subunits of the AP-3 protein complex.

The protein resides in the cytoplasm. Functionally, GTPase-activating protein. Directly and specifically regulates the adapter protein 3 (AP-3)-dependent trafficking of proteins in the endosomal-lysosomal system. The polypeptide is Arf-GAP with GTPase, ANK repeat and PH domain-containing protein 1 (agap1) (Xenopus laevis (African clawed frog)).